The following is a 269-amino-acid chain: 5'-nucleotidase SurE (269 aa).

A divalent metal cation is bound by residues Asp8, Asp9, Ser40, and Asn93.

Belongs to the SurE nucleotidase family. A divalent metal cation is required as a cofactor.

The protein localises to the cytoplasm. It catalyses the reaction a ribonucleoside 5'-phosphate + H2O = a ribonucleoside + phosphate. In terms of biological role, nucleotidase that shows phosphatase activity on nucleoside 5'-monophosphates. In Caulobacter sp. (strain K31), this protein is 5'-nucleotidase SurE.